The sequence spans 489 residues: Glutamyl-tRNA(Gln) amidotransferase subunit A (489 aa).

Catalysis depends on charge relay system residues Lys-80 and Ser-160. Ser-184 (acyl-ester intermediate) is an active-site residue.

It belongs to the amidase family. GatA subfamily. In terms of assembly, heterotrimer of A, B and C subunits.

The catalysed reaction is L-glutamyl-tRNA(Gln) + L-glutamine + ATP + H2O = L-glutaminyl-tRNA(Gln) + L-glutamate + ADP + phosphate + H(+). In terms of biological role, allows the formation of correctly charged Gln-tRNA(Gln) through the transamidation of misacylated Glu-tRNA(Gln) in organisms which lack glutaminyl-tRNA synthetase. The reaction takes place in the presence of glutamine and ATP through an activated gamma-phospho-Glu-tRNA(Gln). The chain is Glutamyl-tRNA(Gln) amidotransferase subunit A from Wolbachia pipientis wMel.